A 261-amino-acid polypeptide reads, in one-letter code: Putative diacylated glycolipid transporter LprF (261 aa).

The first 38 residues, 1 to 38 (MNGLISQACGSHRPRRPSSLGAVAILIAATLFATVVAG), serve as a signal peptide directing secretion. A lipid anchor (N-palmitoyl cysteine) is attached at Cys39. Cys39 carries the S-diacylglycerol cysteine lipid modification. The interval 42–61 (KPTTASSPSPGSPSPEAQQI) is disordered.

The protein belongs to the LppX/LprAFG lipoprotein family. Monomer. Modified by Lgt on Cys-39 with an S-linked diacylglycerol with a mixture of C16, C18 and C19 fatty acids (palmitic, stearic and tuberculostearic acid respectively), signal peptide is removed by LspA, modified by Lnt with an amide-linked mixture of C16 and C19 fatty acids.

It localises to the cell membrane. Might be involved in transporting short diacylated glycolipids to the cell outer membrane. Binds glycolipids that contain a diacylated glycerophosphate or a diacylated phosphatidylinositol moiety with C14 and C16 chains (upon overexpression in M.smegmatis; M.smegmatis does not encode this gene). Overexpression in M.smegmatis increases the cell wall glycolipid LAM/LM ratio (lipoarabinomannan/lipomannan), suggesting perhaps this protein is involved in the preferential translocation of diacylated LAM to the outer cell membrane. Overexpressing M.smegmatis cells adhere less well to hexadecane droplets, indicating decrease in the hydrophobicity of the cell surface, and have a slightly increased resistance to the antibiotic ethambutol. The sequence is that of Putative diacylated glycolipid transporter LprF (lprF) from Mycobacterium bovis (strain ATCC BAA-935 / AF2122/97).